The chain runs to 479 residues: Something about silencing protein 10 (479 aa).

The span at 1–10 (MVGRSRRRGA) shows a compositional bias: basic residues. Disordered stretches follow at residues 1 to 45 (MVGR…SYYQ) and 62 to 166 (KGWN…EEAQ). Residue R8 is modified to Omega-N-methylarginine. The segment covering 11–21 (AKWAAVRAKAG) has biased composition (low complexity). A Phosphoserine modification is found at S37. Over residues 69–111 (SGDEEDGEEEEEEVLALDMDDEDDEDGGNAGEEEEEENADDDG) the composition is skewed to acidic residues. Residue K144 is modified to N6-acetyllysine; alternate. K144 participates in a covalent cross-link: Glycyl lysine isopeptide (Lys-Gly) (interchain with G-Cter in SUMO2); alternate. Position 150 is a phosphoserine (S150). The segment covering 153–165 (EAEEEEREEEEEA) has biased composition (acidic residues). T362 bears the Phosphothreonine mark. Residues S365 and S368 each carry the phosphoserine modification. R385 carries the post-translational modification Citrulline. The segment at 419–466 (RGLTPRRKKIDRNPRVKHREKFRRAKIRRRGQVREVRKEEQRYSGELS) is disordered. Residues 422–449 (TPRRKKIDRNPRVKHREKFRRAKIRRRG) show a composition bias toward basic residues. The segment covering 450 to 461 (QVREVRKEEQRY) has biased composition (basic and acidic residues).

The protein belongs to the SAS10 family. As to quaternary structure, part of the small subunit (SSU) processome, composed of more than 70 proteins and the RNA chaperone small nucleolar RNA (snoRNA) U3. In terms of processing, citrullinated by PADI4.

It localises to the nucleus. The protein localises to the nucleolus. In terms of biological role, essential for gene silencing: has a role in the structure of silenced chromatin. Plays a role in the developing brain. Part of the small subunit (SSU) processome, first precursor of the small eukaryotic ribosomal subunit. During the assembly of the SSU processome in the nucleolus, many ribosome biogenesis factors, an RNA chaperone and ribosomal proteins associate with the nascent pre-rRNA and work in concert to generate RNA folding, modifications, rearrangements and cleavage as well as targeted degradation of pre-ribosomal RNA by the RNA exosome. The protein is Something about silencing protein 10 of Homo sapiens (Human).